We begin with the raw amino-acid sequence, 1093 residues long: MSQPGIPASGGAPASLQAQNGAALASGSPYTNGPVQNALLSSQESVSQGYNFQLPGSYPHPIPAKTLNPVSGQSNYGGSQGSGQTLNRPPVASNPVTPSLHSGPAPRMPLPASQNPATTPMPSSSFLPEANLPPPLNWQYNYPSTASQTNHCPRASSQPTVSGNTSLTTNHQYVSSGYPSLQNSFIKSGPSVPPLVNPPLPTTFQPGAPHGPPPAGGPPPVRALTPLTSSYRDVPQPLFNSAVNQEGITSNTNNGSMVVHSSYDEIEGGGLLATPQLTNKNPKMSRSVGYSYPSLPPGYQNTTPPGATGVPPSSLNYPSGPQAFTQTPLGANHLTTSMSGLSLQPEGLRVVNLLQERNMLPSTPLKPPVPNLHEDIQKLNCNPELFRCTLTSIPQTQALLNKAKLPLGLLLHPFKDLVQLPVVTSSTIVRCRSCRTYINPFVSFLDQRRWKCNLCYRVNDVPEEFLYNPLTRVYGEPHRRPEVQNATIEFMAPSEYMLRPPQPPVYLFVFDVSHNAVETGYLNSVCQSLLDNLDLLPGNTRTKIGFITFDSTIHFYGLQESLSQPQMLIVSDIEDVFIPMPENLLVNLNESKELVQDLLKTLPQMFTKTLETQSALGPALQAAFKLMSPTGGRMSVFQTQLPTLGVGALKPREEPNHRSSAKDIHMTPSTDFYKKLALDCSGQQVAVDLFLLSGQYSDLASLGCISRYSAGSVYYYPSYHHQHNPVQVQKLQKELQRYLTRKIGFEAVMRIRCTKGLSIHTFHGNFFVRSTDLLSLPNVNPDAGYAVQMSVEESLTDTQLVSFQSALLYTSSKGERRIRVHTLCLPVVSTLNDVFLGADVQAISGLLANMAVDRSMTASLSDARDALVNAVIDSLSAYRSSVLSNQQPGLMVPFSLRLFPLFVLALLKQKSFQTGTNARLDERIFAMCQVKNQPLVYLMLTTHPSLYRVDNLSDEGALNISDRTIPQPPILQLSVEKLSRDGAFLMDAGSVLMLWVGKNCTQNFLSQVLGVQNYASIPQPMTDLPELDTPESARIIAFISWLREQRPFFPILYVIRDESPMKANFLQNMIEDRTESALSYYEFLLHIQQQVNK.

Disordered regions lie at residues 1 to 29 (MSQP…SGSP), 60 to 168 (HPIP…TSLT), 189 to 226 (GPSV…ALTP), and 294 to 328 (SLPP…TQTP). 2 stretches are compositionally biased toward polar residues: residues 112–126 (ASQN…SSSF) and 138–168 (WQYN…TSLT). 2 stretches are compositionally biased toward pro residues: residues 191–201 (SVPPLVNPPLP) and 209–221 (PHGP…PPPV). The segment covering 299–328 (YQNTTPPGATGVPPSSLNYPSGPQAFTQTP) has biased composition (polar residues). Zn(2+) contacts are provided by cysteine 431, cysteine 434, cysteine 452, and cysteine 455. The interval 431–455 (CRSCRTYINPFVSFLDQRRWKCNLC) is zinc finger-like. Residues 966-1038 (PQPPILQLSV…TPESARIIAF (73 aa)) form a Gelsolin-like repeat.

It belongs to the SEC23/SEC24 family. SEC24 subfamily. As to quaternary structure, COPII is composed of at least five proteins: the Sec23/24 complex, the Sec13/31 complex and Sar1. Interacts with TMED2. Interacts (as part of the Sec23/24 complex) with SEC22B; recruits SEC22B into COPII-coated vesicles for its transport from the endoplasmic reticulum to the Golgi. Interacts with STING1; promoting STING1 translocation to COPII vesicles in a STEEP1-dependent manner. Interacts with TMEM39A. Interacts with SACM1L; this interaction is reduced in the absence of TMEM39A. Interacts with kinase FAM20C; transport of FAM20C from the endoplasmic reticulum to the Golgi is likely to be mediated by COPII vesicles.

The protein localises to the cytoplasmic vesicle. The protein resides in the COPII-coated vesicle membrane. Its subcellular location is the endoplasmic reticulum membrane. It localises to the cytoplasm. It is found in the cytosol. Functionally, component of the coat protein complex II (COPII) which promotes the formation of transport vesicles from the endoplasmic reticulum (ER). The coat has two main functions, the physical deformation of the endoplasmic reticulum membrane into vesicles and the selection of cargo molecules for their transport to the Golgi complex. Plays a central role in cargo selection within the COPII complex and together with SEC24B may have a different specificity compared to SEC24C and SEC24D. May package preferentially cargos with cytoplasmic DxE or LxxLE motifs and may also recognize conformational epitopes. The sequence is that of Protein transport protein Sec24A from Homo sapiens (Human).